Here is a 567-residue protein sequence, read N- to C-terminus: MNARLASSRAWVWCFLMVGLVCGATAKAESKINYRRISLRVTDKTTGDEYFRFITILRDYVSIGSFSNDIPLLRQSTIPVSDAQRFVLVELTNQWGDSITAAIDVTNLYVVAYQAAGQSYYLRDAPHGAERHLFTGTTRSSLPFNGSYADLERYAGHRDRIPLGREPLLRSVSALHYPGGSTRAQASSIIIVIQMISEAARFNPILWRARQYINRGVSFLPDVYMLELETSWGRQSTQVQQSTDGVFNNPIRLGISTGNFVTLSNVRDVIPSLAIMVFVCRDRSSSSDVHNWPLVIRPVMVDDVTCTTSEPTVRIVGRNGMCLDVRDSDYRDGSRIQLWPCKSNSDPNQLWTIRRDGTIRSNGSCLTTYGYTAGSYIMMYDCNRAGWDLTTWQIRGNGIIFNPRSKMVIGTPSGSRGTRGTTFTLQTLDDSLGQSWLASNDTAPREVTIYGFRDLCMETSGGRVWVESCVSSKQNQRWALYGDGSIRPKPYQDQCLTSQGDSVRSVINLFSCTAGSPRQRWVFTNKGTILNLKNGLALDVRESNPSLRQIIIFSVSGNPNQMWLPVP.

A signal peptide spans 1-33 (MNARLASSRAWVWCFLMVGLVCGATAKAESKIN). N-linked (GlcNAc...) asparagine glycosylation occurs at Asn-145. Glu-198 is a catalytic residue. Disulfide bonds link Cys-280/Cys-306 and Cys-322/Cys-341. The propeptide at 288-301 (DVHNWPLVIRPVMV) is connecting peptide. The Ricin B-type lectin 1 domain maps to 309 to 439 (SEPTVRIVGR…DSLGQSWLAS (131 aa)). 324-326 (DVR) provides a ligand contact to D-galactose. Asn-362 is a glycosylation site (N-linked (GlcNAc...) asparagine). Cys-365 and Cys-382 are disulfide-bonded. Asn-440 carries an N-linked (GlcNAc...) asparagine glycan. The 124-residue stretch at 443–566 (APREVTIYGF…GNPNQMWLPV (124 aa)) folds into the Ricin B-type lectin 2 domain. 2 disulfides stabilise this stretch: Cys-456–Cys-469 and Cys-495–Cys-512. Residue 539–541 (DVR) coordinates D-galactose.

The protein belongs to the ribosome-inactivating protein family. Type 2 RIP subfamily. In terms of assembly, disulfide-linked dimer of A and B chains.

It carries out the reaction Endohydrolysis of the N-glycosidic bond at one specific adenosine on the 28S rRNA.. Functionally, the A chain is responsible for inhibiting protein synthesis through the catalytic inactivation of 60S ribosomal subunits by removing adenine from position 4,324 of 28S rRNA. The B chain binds to cell receptors and probably facilitates the entry into the cell of the A chain; B chains are also responsible for cell agglutination (lectin activity). In Viscum album (European mistletoe), this protein is Beta-galactoside-specific lectin 2.